The primary structure comprises 94 residues: Cyclin-dependent kinases regulatory subunit (94 aa).

It belongs to the CKS family. In terms of assembly, forms a homohexamer that can probably bind six kinase subunits. Interacts with cdk-1.

Its subcellular location is the nucleus. Its function is as follows. Binds to the catalytic subunit of the cyclin dependent kinases and is essential for their biological function. Has a role in the exit from M phase during early mitotic cell division. More specifically, thought to act by degrading B-type cyclins that causes breakdown of nuclear envelope and exit mitosis. This is Cyclin-dependent kinases regulatory subunit (cks-1) from Caenorhabditis elegans.